Reading from the N-terminus, the 428-residue chain is Glutamate-1-semialdehyde 2,1-aminomutase (428 aa).

Lys-265 carries the post-translational modification N6-(pyridoxal phosphate)lysine.

The protein belongs to the class-III pyridoxal-phosphate-dependent aminotransferase family. HemL subfamily. As to quaternary structure, homodimer. It depends on pyridoxal 5'-phosphate as a cofactor.

Its subcellular location is the cytoplasm. It carries out the reaction (S)-4-amino-5-oxopentanoate = 5-aminolevulinate. Its pathway is porphyrin-containing compound metabolism; protoporphyrin-IX biosynthesis; 5-aminolevulinate from L-glutamyl-tRNA(Glu): step 2/2. The protein is Glutamate-1-semialdehyde 2,1-aminomutase of Thioalkalivibrio sulfidiphilus (strain HL-EbGR7).